We begin with the raw amino-acid sequence, 170 residues long: Neurotensin/neuromedin N (170 aa).

The signal sequence occupies residues 1-23; it reads MMAGMKIQLVCMILLAFSSWSLC.

It belongs to the neurotensin family. As to quaternary structure, interacts with NTSR1. Interacts with SORT1. Interacts with SORL1. In terms of processing, neurotensin is cleaved and degraded by Angiotensin-converting enzyme (ACE) and neprilysin (MME).

The protein localises to the secreted. It localises to the cytoplasmic vesicle. Its subcellular location is the secretory vesicle. In terms of biological role, neurotensin may play an endocrine or paracrine role in the regulation of fat metabolism. It causes contraction of smooth muscle. This Canis lupus familiaris (Dog) protein is Neurotensin/neuromedin N (NTS).